The chain runs to 370 residues: tRNA-specific 2-thiouridylase MnmA (370 aa).

ATP contacts are provided by residues 6 to 13 (AMSGGVDS) and Leu32. Cys101 serves as the catalytic Nucleophile. A disulfide bond links Cys101 and Cys193. Gly125 is a binding site for ATP. The segment at 143–145 (KDQ) is interaction with tRNA. The Cysteine persulfide intermediate role is filled by Cys193.

The protein belongs to the MnmA/TRMU family.

It is found in the cytoplasm. It catalyses the reaction S-sulfanyl-L-cysteinyl-[protein] + uridine(34) in tRNA + AH2 + ATP = 2-thiouridine(34) in tRNA + L-cysteinyl-[protein] + A + AMP + diphosphate + H(+). Catalyzes the 2-thiolation of uridine at the wobble position (U34) of tRNA, leading to the formation of s(2)U34. The protein is tRNA-specific 2-thiouridylase MnmA of Rhodococcus erythropolis (strain PR4 / NBRC 100887).